A 512-amino-acid chain; its full sequence is Mesoderm induction early response protein 1 (512 aa).

Over residues 1-16 (MAEPSVESSSPGGSAT) the composition is skewed to low complexity. Disordered stretches follow at residues 1–63 (MAEP…REGD) and 75–173 (YGST…EDYI). Serine 10 is subject to Phosphoserine. Basic and acidic residues predominate over residues 17-36 (SDDHEFDPSADMLVHDFDDE). Composition is skewed to acidic residues over residues 37-46 (RTLEEEEMME) and 83-105 (EEDE…DNDD). A compositionally biased stretch (polar residues) spans 129-144 (QSSNDDPSQSVASQDA). A Phosphoserine modification is found at serine 141. Tyrosine 155 carries the phosphotyrosine modification. A phosphoserine mark is found at serine 160 and serine 166. Over residues 160-173 (SEVEEESEEDEDYI) the composition is skewed to acidic residues. The ELM2 domain maps to 180 to 278 (KEIMVGSMFQ…EALRRLRFNV (99 aa)). Residues 180 to 284 (KEIMVGSMFQ…RFNVKAAREE (105 aa)) form an interaction with HDAC1 region. Lysine 239 participates in a covalent cross-link: Glycyl lysine isopeptide (Lys-Gly) (interchain with G-Cter in SUMO2). The 53-residue stretch at 283-335 (EELSVWTEEECRNFEQGLKAYGKDFHLIQANKVRTRSVGECVAFYYMWKKSER) folds into the SANT domain. Residues 366 to 512 (ESESAASSRA…KFEELENTDD (147 aa)) are disordered. A phosphoserine mark is found at serine 367, serine 369, and serine 377. Positions 396–409 (TVSTTNQNGVSSNG) are enriched in polar residues. Residues 414 to 423 (LNKEEVKVEG) are compositionally biased toward basic and acidic residues. Lysine 420 participates in a covalent cross-link: Glycyl lysine isopeptide (Lys-Gly) (interchain with G-Cter in SUMO2). Threonine 448 carries the phosphothreonine modification. Basic and acidic residues predominate over residues 462–475 (ARNENDFDEKSERP). The segment covering 482-494 (NSNGKESPGSSEF) has biased composition (polar residues). 3 positions are modified to phosphoserine: serine 483, serine 488, and serine 491.

In terms of assembly, interacts with HDAC1. Part of a complex containing at least CDYL, MIER1, MIER2, HDAC1 and HDAC2.

It localises to the nucleus. Its function is as follows. Transcriptional repressor regulating the expression of a number of genes including SP1 target genes. Probably functions through recruitment of HDAC1 a histone deacetylase involved in chromatin silencing. This chain is Mesoderm induction early response protein 1 (MIER1), found in Pongo abelii (Sumatran orangutan).